The sequence spans 383 residues: MVHITLPGLLLCLCLYLSVAPANPLNAHARVSDTTAFPLPNEGHVVAHDPSIVRHHEHFYLFKGGIHIPVFRASNLSGPWERLGTVLNGPSLVQKQNQRRPWAPMVTQWKNRFYCFYSISQNGKRNSAIGVASSDSVEPGGWTDHGPLINTGHGPGSGVYPFNVSNAIDPAFFADPITGQPYLQYGSYWKGIFQVPLAEDLLSVENATHPNTDHLVFLPKKKPKPNEGVFMSYRAPYYYAWFSHGQCCHFKTQGFPKEGNEYSIRVGRSTSVHGPFVDRDNKDLLNGGGSVVYGSNHGKVYAPGGLGVLPGANGEPDVLYYHYHNASIGFAQGDARLGWNYLDYVDGWPVPRAPSNPGNSLQPPSSVSLQIVAFLCLVILFTL.

A signal peptide spans 1 to 22 (MVHITLPGLLLCLCLYLSVAPA). Asp49 acts as the Proton acceptor in catalysis. N-linked (GlcNAc...) asparagine glycosylation is found at Asn75, Asn163, and Asn206. The Proton donor role is filled by Glu227. Residue Asn325 is glycosylated (N-linked (GlcNAc...) asparagine). Asn356 is lipidated: GPI-anchor amidated asparagine. Residues 357 to 383 (PGNSLQPPSSVSLQIVAFLCLVILFTL) constitute a propeptide, removed in mature form.

This sequence belongs to the glycosyl hydrolase 43 family.

The protein resides in the cell membrane. It catalyses the reaction Endohydrolysis of (1-&gt;5)-alpha-arabinofuranosidic linkages in (1-&gt;5)-arabinans.. The protein operates within glycan metabolism; L-arabinan degradation. Endo-1,5-alpha-L-arabinanase involved in degradation of pectin. Its preferred substrate is linear 1,5-alpha-L-arabinan. This chain is Probable arabinan endo-1,5-alpha-L-arabinosidase D (abnD), found in Emericella nidulans (strain FGSC A4 / ATCC 38163 / CBS 112.46 / NRRL 194 / M139) (Aspergillus nidulans).